We begin with the raw amino-acid sequence, 974 residues long: Short transient receptor potential channel 5 (974 aa).

At 1-325 (MAQLYYKKVN…YDGFPGWRRK (325 aa)) the chain is on the cytoplasmic side. ANK repeat units lie at residues 30–60 (SAEE…IYYN), 69–97 (LGRS…VYVG), 98–124 (DALL…PSGE), and 141–170 (PDIT…TIPR). Residues histidine 172, cysteine 176, cysteine 178, and cysteine 181 each coordinate Zn(2+). Positions 326–360 (HWVVKLLTCMTIGFLFPMLSIAYLISPRSNLGLFI) form an intramembrane region, discontinuously helical. The Cytoplasmic segment spans residues 361–363 (KKP). Residues 364–384 (FIKFICHTASYLTFLFMLLLA) form a helical membrane-spanning segment. Over 385–404 (SQHIVRTDLHVQGPPPTVVE) the chain is Extracellular. Residues 405–419 (WMILPWVLGFIWGEI) traverse the membrane as a helical segment. Positions 418, 421, 436, and 439 each coordinate Ca(2+). Over 420–433 (KEMWDGGFTEYIHD) the chain is Cytoplasmic. Residues 434-454 (WWNLMDFAMNSLYLATISLKI) form a helical membrane-spanning segment. The Extracellular segment spans residues 455–476 (VAYVKYNGSRPREEWEMWHPTL). Asparagine 461 carries an N-linked (GlcNAc...) asparagine glycan. The chain crosses the membrane as a helical span at residues 477–497 (IAEALFAISNILSSLRLISLF). Over 498–512 (TANSHLGPLQISLGR) the chain is Cytoplasmic. The helical transmembrane segment at 513 to 535 (MLLDILKFLFIYCLVLLAFANGL) threads the bilayer. Topologically, residues 536–603 (NQLYFYYETR…HEFTEFVGAT (68 aa)) are extracellular. An intrachain disulfide couples cysteine 553 to cysteine 558. Residues 604-624 (MFGTYNVISLVVLLNMLIAMM) form a helical membrane-spanning segment. At 625–974 (NNSYQLIADH…GQEEQVTTRL (350 aa)) the chain is on the cytoplasmic side. 2 disordered regions span residues 766–795 (QPRR…RAKS) and 811–838 (GPPL…KRSF). Residues 769-778 (RSLSTSSTEL) show a composition bias toward low complexity. An essential for binding to NHERF1 PDZ domain region spans residues 972–974 (TRL).

It belongs to the transient receptor (TC 1.A.4) family. STrpC subfamily. TRPC5 sub-subfamily. Homotetramer. Heterotetramer with TRPC1 and/or TRPC4. Each subunit in the homomeric ion channel (via ANK repeats) interacts with one copy of GTP-bound GNAI3; the interaction is direct and activates the ion channel. Interacts with TRPC4AP. Interacts with NHERF1. Interacts with MX1 and RNF24. Interacts (via C-terminus) with CABP1. Interacts with SESTD1 (via the spectrin 1 repeat). Interacts with PLSCR1. Interacts with PKD2L2. Expressed in brain.

It is found in the cell membrane. The enzyme catalyses Ca(2+)(in) = Ca(2+)(out). Activated by G-protein coupled receptors via direct interaction with GTP-bound GNAI3, which increases the channel sensitivity to phosphatidylinositol bisphosphate. May be activated by intracellular calcium store depletion. Calcium channel activity is enhanced by MYLK, that promotes its subcellular localization at the plasma membrane. In terms of biological role, forms a receptor-activated non-selective calcium permeant cation channel. Mediates calcium-dependent phosphatidylserine externalization and apoptosis in neurons via its association with PLSCR1. Acts on distinct neuronal populations in the hypothalamus to regulate innate behaviors including feeding, anxiety (flight/fight/fear), socialization and maternal care. This chain is Short transient receptor potential channel 5 (TRPC5), found in Oryctolagus cuniculus (Rabbit).